Consider the following 203-residue polypeptide: MSRYTGPSWKRSRRLGISLSGTGKELARRNYAPGQHGPNSRGRLSEYGQQLHEKQKLRWMYGLNERQFRTLFIRAGKIREGQHGINFMILLERRLDSIVYRLGLATTREQARQLVNHGHITVDGKRVDIPSYEVSVGQTIGLKDKSKNLQQIRDALEATTARPSFVSFDENKMEGTLVRLPERDEMEPEIDESLVVEWYNKLL.

Residues 93 to 155 (RRLDSIVYRL…SKNLQQIRDA (63 aa)) form the S4 RNA-binding domain.

Belongs to the universal ribosomal protein uS4 family. As to quaternary structure, part of the 30S ribosomal subunit. Contacts protein S5. The interaction surface between S4 and S5 is involved in control of translational fidelity.

Its function is as follows. One of the primary rRNA binding proteins, it binds directly to 16S rRNA where it nucleates assembly of the body of the 30S subunit. With S5 and S12 plays an important role in translational accuracy. In Lactobacillus acidophilus (strain ATCC 700396 / NCK56 / N2 / NCFM), this protein is Small ribosomal subunit protein uS4.